Here is a 369-residue protein sequence, read N- to C-terminus: Ribonuclease D (369 aa).

The 166-residue stretch at 1–166 folds into the 3'-5' exonuclease domain; the sequence is MITTNDALAA…PIAHKLMEQV (166 aa). In terms of domain architecture, HRDC spans 206 to 285; sequence RPRQLACLKL…AQAQALLEDA (80 aa).

This sequence belongs to the RNase D family. It depends on a divalent metal cation as a cofactor.

The protein localises to the cytoplasm. It catalyses the reaction Exonucleolytic cleavage that removes extra residues from the 3'-terminus of tRNA to produce 5'-mononucleotides.. Its function is as follows. Exonuclease involved in the 3' processing of various precursor tRNAs. Initiates hydrolysis at the 3'-terminus of an RNA molecule and releases 5'-mononucleotides. The sequence is that of Ribonuclease D from Cronobacter turicensis (strain DSM 18703 / CCUG 55852 / LMG 23827 / z3032).